The primary structure comprises 260 residues: GTP cyclohydrolase FolE2 (260 aa).

It belongs to the GTP cyclohydrolase IV family.

It carries out the reaction GTP + H2O = 7,8-dihydroneopterin 3'-triphosphate + formate + H(+). Its pathway is cofactor biosynthesis; 7,8-dihydroneopterin triphosphate biosynthesis; 7,8-dihydroneopterin triphosphate from GTP: step 1/1. Functionally, converts GTP to 7,8-dihydroneopterin triphosphate. The sequence is that of GTP cyclohydrolase FolE2 from Desulfosudis oleivorans (strain DSM 6200 / JCM 39069 / Hxd3) (Desulfococcus oleovorans).